The chain runs to 295 residues: ATP synthase gamma chain (295 aa).

This sequence belongs to the ATPase gamma chain family. As to quaternary structure, F-type ATPases have 2 components, CF(1) - the catalytic core - and CF(0) - the membrane proton channel. CF(1) has five subunits: alpha(3), beta(3), gamma(1), delta(1), epsilon(1). CF(0) has three main subunits: a, b and c.

It is found in the cell inner membrane. Functionally, produces ATP from ADP in the presence of a proton gradient across the membrane. The gamma chain is believed to be important in regulating ATPase activity and the flow of protons through the CF(0) complex. The protein is ATP synthase gamma chain of Paraburkholderia phymatum (strain DSM 17167 / CIP 108236 / LMG 21445 / STM815) (Burkholderia phymatum).